Reading from the N-terminus, the 59-residue chain is Large ribosomal subunit protein bL32 (59 aa).

A disordered region spans residues 1–59; the sequence is MAVQQNKKSPSKRGMHRSHDALTAPALSVDSTTGEVHRPHHISPNGMYRGRKVVKVKGE. The segment covering 49-59 has biased composition (basic residues); sequence RGRKVVKVKGE.

This sequence belongs to the bacterial ribosomal protein bL32 family.

In Neisseria meningitidis serogroup A / serotype 4A (strain DSM 15465 / Z2491), this protein is Large ribosomal subunit protein bL32 (rpmF).